We begin with the raw amino-acid sequence, 92 residues long: Signal recognition particle 19 kDa protein (92 aa).

This sequence belongs to the SRP19 family. In terms of assembly, part of the signal recognition particle protein translocation system, which is composed of SRP and FtsY. Archaeal SRP consists of a 7S RNA molecule of 300 nucleotides and two protein subunits: SRP54 and SRP19.

It is found in the cytoplasm. Functionally, involved in targeting and insertion of nascent membrane proteins into the cytoplasmic membrane. Binds directly to 7S RNA and mediates binding of the 54 kDa subunit of the SRP. The chain is Signal recognition particle 19 kDa protein from Methanosphaera stadtmanae (strain ATCC 43021 / DSM 3091 / JCM 11832 / MCB-3).